Consider the following 266-residue polypeptide: GTP cyclohydrolase FolE2 (266 aa).

It belongs to the GTP cyclohydrolase IV family.

It catalyses the reaction GTP + H2O = 7,8-dihydroneopterin 3'-triphosphate + formate + H(+). Its pathway is cofactor biosynthesis; 7,8-dihydroneopterin triphosphate biosynthesis; 7,8-dihydroneopterin triphosphate from GTP: step 1/1. Functionally, converts GTP to 7,8-dihydroneopterin triphosphate. The sequence is that of GTP cyclohydrolase FolE2 from Burkholderia mallei (strain ATCC 23344).